The following is a 233-amino-acid chain: Cytidylate kinase (233 aa).

Residue 15 to 23 (GPSGAGKSS) participates in ATP binding. Residues 183–200 (QRDRQDEGREHAPLKQAE) show a composition bias toward basic and acidic residues. Residues 183–203 (QRDRQDEGREHAPLKQAEDAV) are disordered.

It belongs to the cytidylate kinase family. Type 1 subfamily.

The protein resides in the cytoplasm. It catalyses the reaction CMP + ATP = CDP + ADP. The catalysed reaction is dCMP + ATP = dCDP + ADP. This Geobacter sp. (strain M21) protein is Cytidylate kinase.